Reading from the N-terminus, the 378-residue chain is Queuine tRNA-ribosyltransferase (378 aa).

The Proton acceptor role is filled by Asp89. Substrate contacts are provided by residues 89–93 (DSGGF), Asp143, Gln187, and Gly214. Positions 245–251 (GVGKPED) are RNA binding. Asp264 functions as the Nucleophile in the catalytic mechanism. The interval 269 to 273 (TRNAR) is RNA binding; important for wobble base 34 recognition. Zn(2+)-binding residues include Cys302, Cys304, Cys307, and His333.

The protein belongs to the queuine tRNA-ribosyltransferase family. As to quaternary structure, homodimer. Within each dimer, one monomer is responsible for RNA recognition and catalysis, while the other monomer binds to the replacement base PreQ1. The cofactor is Zn(2+).

The catalysed reaction is 7-aminomethyl-7-carbaguanine + guanosine(34) in tRNA = 7-aminomethyl-7-carbaguanosine(34) in tRNA + guanine. It functions in the pathway tRNA modification; tRNA-queuosine biosynthesis. Catalyzes the base-exchange of a guanine (G) residue with the queuine precursor 7-aminomethyl-7-deazaguanine (PreQ1) at position 34 (anticodon wobble position) in tRNAs with GU(N) anticodons (tRNA-Asp, -Asn, -His and -Tyr). Catalysis occurs through a double-displacement mechanism. The nucleophile active site attacks the C1' of nucleotide 34 to detach the guanine base from the RNA, forming a covalent enzyme-RNA intermediate. The proton acceptor active site deprotonates the incoming PreQ1, allowing a nucleophilic attack on the C1' of the ribose to form the product. After dissociation, two additional enzymatic reactions on the tRNA convert PreQ1 to queuine (Q), resulting in the hypermodified nucleoside queuosine (7-(((4,5-cis-dihydroxy-2-cyclopenten-1-yl)amino)methyl)-7-deazaguanosine). This is Queuine tRNA-ribosyltransferase from Aeromonas hydrophila subsp. hydrophila (strain ATCC 7966 / DSM 30187 / BCRC 13018 / CCUG 14551 / JCM 1027 / KCTC 2358 / NCIMB 9240 / NCTC 8049).